A 173-amino-acid polypeptide reads, in one-letter code: Protein GrpE (173 aa).

Positions 1–20 (MQDEFKTDTPRTEAGSEKET) are enriched in basic and acidic residues. The tract at residues 1–23 (MQDEFKTDTPRTEAGSEKETMPS) is disordered.

Belongs to the GrpE family. Homodimer.

The protein resides in the cytoplasm. In terms of biological role, participates actively in the response to hyperosmotic and heat shock by preventing the aggregation of stress-denatured proteins, in association with DnaK and GrpE. It is the nucleotide exchange factor for DnaK and may function as a thermosensor. Unfolded proteins bind initially to DnaJ; upon interaction with the DnaJ-bound protein, DnaK hydrolyzes its bound ATP, resulting in the formation of a stable complex. GrpE releases ADP from DnaK; ATP binding to DnaK triggers the release of the substrate protein, thus completing the reaction cycle. Several rounds of ATP-dependent interactions between DnaJ, DnaK and GrpE are required for fully efficient folding. The sequence is that of Protein GrpE from Thiobacillus denitrificans (strain ATCC 25259 / T1).